The following is a 165-amino-acid chain: Phosphopantetheine adenylyltransferase (165 aa).

Substrate is bound at residue T9. Residues 9–10 (TF) and H17 each bind ATP. Substrate contacts are provided by K41, L73, and R87. ATP-binding positions include 88-90 (GLR), E98, and 123-129 (YQFISGT).

Belongs to the bacterial CoaD family. In terms of assembly, homohexamer. Requires Mg(2+) as cofactor.

It is found in the cytoplasm. It catalyses the reaction (R)-4'-phosphopantetheine + ATP + H(+) = 3'-dephospho-CoA + diphosphate. Its pathway is cofactor biosynthesis; coenzyme A biosynthesis; CoA from (R)-pantothenate: step 4/5. Reversibly transfers an adenylyl group from ATP to 4'-phosphopantetheine, yielding dephospho-CoA (dPCoA) and pyrophosphate. The protein is Phosphopantetheine adenylyltransferase of Burkholderia orbicola (strain MC0-3).